Here is a 183-residue protein sequence, read N- to C-terminus: Large ribosomal subunit protein uL6 (183 aa).

It belongs to the universal ribosomal protein uL6 family. In terms of assembly, part of the 50S ribosomal subunit.

This protein binds to the 23S rRNA, and is important in its secondary structure. It is located near the subunit interface in the base of the L7/L12 stalk, and near the tRNA binding site of the peptidyltransferase center. This is Large ribosomal subunit protein uL6 from Malacoplasma penetrans (strain HF-2) (Mycoplasma penetrans).